Here is a 349-residue protein sequence, read N- to C-terminus: NADP-dependent alcohol dehydrogenase C 1 (349 aa).

The Zn(2+) site is built by Cys-41, His-63, Cys-94, Cys-97, Cys-100, Cys-108, and Cys-159. An Isoglutamyl lysine isopeptide (Lys-Gln) (interchain with Q-Cter in protein Pup) cross-link involves residue Lys-210.

Belongs to the zinc-containing alcohol dehydrogenase family. Requires Zn(2+) as cofactor.

It carries out the reaction a primary alcohol + NADP(+) = an aldehyde + NADPH + H(+). In terms of biological role, prefers aldehydes over alcohols. The sequence is that of NADP-dependent alcohol dehydrogenase C 1 (adhc1) from Mycolicibacterium smegmatis (strain ATCC 700084 / mc(2)155) (Mycobacterium smegmatis).